Here is a 372-residue protein sequence, read N- to C-terminus: Ligninase A (372 aa).

The first 21 residues, 1–21 (MAFKQLVAAISLALSLTTANA), serve as a signal peptide directing secretion. Residues 22-28 (AVVKEKR) constitute a propeptide that is removed on maturation. 4 disulfide bridges follow: C31–C43, C42–C313, C62–C148, and C277–C345. Residue H75 is the Proton acceptor of the active site. 4 residues coordinate Ca(2+): D76, G94, D96, and S98. H204 is a binding site for heme b. S205, D222, T224, I227, and D229 together coordinate Ca(2+). N285 carries N-linked (GlcNAc...) asparagine glycosylation.

The protein belongs to the peroxidase family. Ligninase subfamily. It depends on heme b as a cofactor. Ca(2+) serves as cofactor.

The enzyme catalyses 1-(3,4-dimethoxyphenyl)-2-(2-methoxyphenoxy)propane-1,3-diol + H2O2 = 3,4-dimethoxybenzaldehyde + guaiacol + glycolaldehyde + H2O. It carries out the reaction 2 (3,4-dimethoxyphenyl)methanol + H2O2 = 2 (3,4-dimethoxyphenyl)methanol radical + 2 H2O. It participates in secondary metabolite metabolism; lignin degradation. Its function is as follows. Depolymerization of lignin. Catalyzes the C(alpha)-C(beta) cleavage of the propyl side chains of lignin. This Phanerodontia chrysosporium (White-rot fungus) protein is Ligninase A (LIPA).